A 1416-amino-acid chain; its full sequence is MSSTKSGSSKYSSGSSISLIMGFSRSLEKGSFGVLYAMIKGNTFPRILTILSMLIEFCQLSSFGFKHQYPWGGDAGYYLKRIMSPVSHPSDVFGYLGFTILFWIAVGLLILGFLNIWYVAYQFYRGKIANIWIIRTLRWFVSFSVAVLFIPIISLLLIGLDCEGSSEGTILRKFDNETIQCFRGANLPIAVISIILIVVFSIVAFTSSATYYEYDTNVKSRFSKPHARFDVTVLFAKFVFAFFNSLVDFVPWLTSITFFVFMVILTFGSIIVLPYNNQRLNQVRSGFYTVVLWVSFMTLVTMGINDETSPATCYITIVGVFFAFPIGFFSNMFYFKWLSSKVSDIQILNQSPSMDLKDANKKGKRNSVEKESSPTSKVTWGKQPITLGSKRQIIFPFFKKKFVMSFFVEIMARSILNNNNEGVSSSSNESIERANNLYQCGLQYFPNSDLLWMAYCNFLFTVRKDRHIGYAALEKLRRMKPSFDVRFFIYQRDKEREQIMDSDLRGPEHTGKIQDFVSYMEFKKLYYGAKRHHVKCLNYIKRFWGHLLHETVDLHRLSDLSGRIATTENKANESYERLLALNPNSVRVLRDYSQFLEEVVKDKESSYKLQKKAEAIEDIMSKSQTTDFKISDIKAIDSDEDDIEKTLQEPTAIQLAKIDADIEKSGSKSGSSKSKDDSSESSSSSKGRRGKYKEFQQSNAINKLSWLMIGTTCCCIIFLIVVLVVFRGLEVKHTNAYQGIISITDCANEAVQMGMHLNAMQAYALVAGVGNNTVEASLIEIARRRALVKRGIIIMKNIHDAIYWGEGNPVSYVGDNLSQLKARDGYDIFDIGSVIFTFDQFNRSSTLLDNKQMIELYSQPSVNMSVLVAPPGSNTTSLYTQTYNAWKAGNAFIESAMLASDVTFDELRYSVNQNPNFKFVTINAPVIMPDIYNKVQTAYIDSLVSDITGTLDAILYTWCGIFAVLFLICAVLFRPIVRKISREKIRTLVLFSLAPKDVVVKLSTKKIKMVSLDSGSERDNLFDTTDDDGRDDHLGEDDNNIQTPVGDNNNNNNNNNNNNNNNGSISSNVTKSDGEIGSDGVRSSSGSNVLNTSSPYRDRRPLMDSTSVLASTATLNNRNVRLQAKDEEITNGGGERKGSDATRTALSEDKKYGWDGKSKRNLNKKSLKSILGRLHWSYILATFLLFGFITMGIWVTFTVVFNNSQSGYTLGKSCSRSLNSRVINYYVAELYTYSQYVSTQNMVDAITELQSSHQSLPYLEEVRPLMEGSYGCWALNKSTCLPPSSMYYEEVNSGLDRVVDSLAKKAINLAYTDQAALLDSPDLQWFLALIDYIFIGLDTATFTYFDYFLEKQEWANTVLTAILSVSCVILLVVHVVLFRPFMNHLRIQHIHTLALLRLAPDDIRYMEVSDKVIDED.

8 consecutive transmembrane segments (helical) span residues 47 to 67 (ILTI…GFKH), 93 to 113 (FGYL…ILGF), 140 to 160 (FVSF…LIGL), 185 to 205 (ANLP…IVAF), 231 to 251 (VTVL…DFVP), 253 to 273 (LTSI…IIVL), 285 to 305 (SGFY…MGIN), and 315 to 335 (ITIV…MFYF). Over residues 356-372 (LKDANKKGKRNSVEKES) the composition is skewed to basic and acidic residues. 2 disordered regions span residues 356-377 (LKDA…PTSK) and 662-691 (IEKS…RRGK). Helical transmembrane passes span 706-726 (WLMI…LVVF) and 953-973 (AILY…AVLF). Disordered regions lie at residues 1018–1103 (RDNL…RPLM) and 1119–1144 (NVRL…ATRT). The segment covering 1024 to 1039 (TTDDDGRDDHLGEDDN) has biased composition (acidic residues). Low complexity-rich tracts occupy residues 1048–1062 (NNNN…NNNN) and 1083–1094 (SSSGSNVLNTSS). Residues 1123-1144 (QAKDEEITNGGGERKGSDATRT) are compositionally biased toward basic and acidic residues. The next 3 membrane-spanning stretches (helical) occupy residues 1179-1199 (ILAT…TFTV), 1325-1345 (WFLA…FTYF), and 1358-1378 (VLTA…VVLF).

Its subcellular location is the membrane. Regulator of the cAMP signaling pathway specific to sexual development. Controls the levels of external cAMP by regulating the expression of phosphodiesterase pdsA and its inhibitor pdiA. The protein is Tiny macrocysts protein B (tmcB) of Dictyostelium discoideum (Social amoeba).